We begin with the raw amino-acid sequence, 90 residues long: YcgL domain-containing protein Spro_2755 (90 aa).

Positions M1–L85 constitute a YcgL domain.

The chain is YcgL domain-containing protein Spro_2755 from Serratia proteamaculans (strain 568).